A 732-amino-acid polypeptide reads, in one-letter code: Integrator complex subunit 13 (732 aa).

A compositionally biased stretch (basic and acidic residues) spans 564–648; that stretch reads PPEEEERKKR…DETPHMEKSK (85 aa). A disordered region spans residues 564–650; that stretch reads PPEEEERKKR…TPHMEKSKGP (87 aa). The short motif at 572–582 is the Nuclear localization signal (NLS) element; the sequence is KRGRKREDRED. A Glycyl lysine isopeptide (Lys-Gly) (interchain with G-Cter in SUMO2) cross-link involves residue K611. 3 positions are modified to phosphoserine: S623, S626, and S678. The tract at residues 649–694 is cleavage module binding motif (CMBM); it reads GPVSLLSLWSNRINTANSRKHQEFAGRLNSVNNRAELYQHLKEENG.

The protein belongs to the Integrator subunit 13 family. As to quaternary structure, component of the Integrator complex, composed of core subunits INTS1, INTS2, INTS3, INTS4, INTS5, INTS6, INTS7, INTS8, INTS9/RC74, INTS10, INTS11/CPSF3L, INTS12, INTS13, INTS14 and INTS15. The core complex associates with protein phosphatase 2A subunits PPP2CA and PPP2R1A, to form the Integrator-PP2A (INTAC) complex. INTS13 is part of the tail subcomplex, composed of INTS10, INTS13, INTS14 and INTS15. Interacts with transcription factors ZNF609 and ZNF655. Interacts with PAFAH1B1; this interaction may be required for proper recruitment of dynein complexes to the nuclear envelope at prophase.

The protein localises to the nucleus. It is found in the cytoplasm. Functionally, component of the integrator complex, a multiprotein complex that terminates RNA polymerase II (Pol II) transcription in the promoter-proximal region of genes. The integrator complex provides a quality checkpoint during transcription elongation by driving premature transcription termination of transcripts that are unfavorably configured for transcriptional elongation: the complex terminates transcription by (1) catalyzing dephosphorylation of the C-terminal domain (CTD) of Pol II subunit POLR2A/RPB1 and SUPT5H/SPT5, (2) degrading the exiting nascent RNA transcript via endonuclease activity and (3) promoting the release of Pol II from bound DNA. The integrator complex is also involved in terminating the synthesis of non-coding Pol II transcripts, such as enhancer RNAs (eRNAs), small nuclear RNAs (snRNAs), telomerase RNAs and long non-coding RNAs (lncRNAs). Within the integrator complex, INTS13 is part of the integrator tail module and acts as a platform for the recruitment of transcription factors at promoters. At prophase, mediates recruitment of cytoplasmic dynein to the nuclear envelope, a step important for proper centrosome-nucleus coupling. At G2/M phase, may be required for proper spindle formation and execution of cytokinesis. The chain is Integrator complex subunit 13 from Mus musculus (Mouse).